The sequence spans 417 residues: Serine/threonine-protein kinase SBK1 (417 aa).

The region spanning 53–318 (YELVRELGKG…VFRFLKHELT (266 aa)) is the Protein kinase domain. ATP is bound by residues 59-67 (LGKGTYGKV) and Lys82. Catalysis depends on Asp174, which acts as the Proton acceptor. The segment at 321-405 (LRRRPSHRAR…TDGRTDKSKG (85 aa)) is disordered. Residues 363–382 (PSPPSVGPVVPVPVPVPVPV) show a composition bias toward pro residues.

It belongs to the protein kinase superfamily. Ser/Thr protein kinase family.

It is found in the cytoplasm. It carries out the reaction L-seryl-[protein] + ATP = O-phospho-L-seryl-[protein] + ADP + H(+). The enzyme catalyses L-threonyl-[protein] + ATP = O-phospho-L-threonyl-[protein] + ADP + H(+). May be involved in signal-transduction pathways related to the control of brain development. The polypeptide is Serine/threonine-protein kinase SBK1 (Sbk1) (Mus musculus (Mouse)).